We begin with the raw amino-acid sequence, 354 residues long: tRNA N6-adenosine threonylcarbamoyltransferase (354 aa).

Fe cation-binding residues include histidine 111 and histidine 115. Substrate-binding positions include 134–138 (LVSGG), aspartate 167, glycine 180, and asparagine 279. Position 319 (aspartate 319) interacts with Fe cation.

Belongs to the KAE1 / TsaD family. The cofactor is Fe(2+).

The protein localises to the cytoplasm. It catalyses the reaction L-threonylcarbamoyladenylate + adenosine(37) in tRNA = N(6)-L-threonylcarbamoyladenosine(37) in tRNA + AMP + H(+). In terms of biological role, required for the formation of a threonylcarbamoyl group on adenosine at position 37 (t(6)A37) in tRNAs that read codons beginning with adenine. Is involved in the transfer of the threonylcarbamoyl moiety of threonylcarbamoyl-AMP (TC-AMP) to the N6 group of A37, together with TsaE and TsaB. TsaD likely plays a direct catalytic role in this reaction. This Neisseria gonorrhoeae (strain ATCC 700825 / FA 1090) protein is tRNA N6-adenosine threonylcarbamoyltransferase.